An 88-amino-acid polypeptide reads, in one-letter code: Cell division topological specificity factor (88 aa).

This sequence belongs to the MinE family.

Its function is as follows. Prevents the cell division inhibition by proteins MinC and MinD at internal division sites while permitting inhibition at polar sites. This ensures cell division at the proper site by restricting the formation of a division septum at the midpoint of the long axis of the cell. This Clostridium botulinum (strain Alaska E43 / Type E3) protein is Cell division topological specificity factor.